Consider the following 334-residue polypeptide: Adenine deaminase (334 aa).

Zn(2+) contacts are provided by His-17, His-19, and His-197. The Proton donor role is filled by Glu-200. Asp-278 provides a ligand contact to Zn(2+). Substrate is bound at residue Asp-279.

The protein belongs to the metallo-dependent hydrolases superfamily. Adenosine and AMP deaminases family. Adenine deaminase type 2 subfamily. Requires Zn(2+) as cofactor.

It catalyses the reaction adenine + H2O + H(+) = hypoxanthine + NH4(+). Catalyzes the hydrolytic deamination of adenine to hypoxanthine. Plays an important role in the purine salvage pathway and in nitrogen catabolism. The sequence is that of Adenine deaminase from Rhodospirillum rubrum (strain ATCC 11170 / ATH 1.1.1 / DSM 467 / LMG 4362 / NCIMB 8255 / S1).